A 257-amino-acid chain; its full sequence is Pyridoxine 5'-phosphate synthase (257 aa).

N6 lines the 3-amino-2-oxopropyl phosphate pocket. 8-9 is a binding site for 1-deoxy-D-xylulose 5-phosphate; the sequence is DH. 3-amino-2-oxopropyl phosphate is bound at residue R17. H41 (proton acceptor) is an active-site residue. Positions 43 and 48 each coordinate 1-deoxy-D-xylulose 5-phosphate. The active-site Proton acceptor is the E68. T98 is a 1-deoxy-D-xylulose 5-phosphate binding site. Catalysis depends on H210, which acts as the Proton donor. 3-amino-2-oxopropyl phosphate is bound by residues G211 and 232 to 233; that span reads GQ.

Belongs to the PNP synthase family. As to quaternary structure, homooctamer; tetramer of dimers.

It localises to the cytoplasm. The enzyme catalyses 3-amino-2-oxopropyl phosphate + 1-deoxy-D-xylulose 5-phosphate = pyridoxine 5'-phosphate + phosphate + 2 H2O + H(+). It functions in the pathway cofactor biosynthesis; pyridoxine 5'-phosphate biosynthesis; pyridoxine 5'-phosphate from D-erythrose 4-phosphate: step 5/5. Its function is as follows. Catalyzes the complicated ring closure reaction between the two acyclic compounds 1-deoxy-D-xylulose-5-phosphate (DXP) and 3-amino-2-oxopropyl phosphate (1-amino-acetone-3-phosphate or AAP) to form pyridoxine 5'-phosphate (PNP) and inorganic phosphate. The sequence is that of Pyridoxine 5'-phosphate synthase from Campylobacter jejuni subsp. doylei (strain ATCC BAA-1458 / RM4099 / 269.97).